The sequence spans 509 residues: Leucine-rich repeat-containing protein 14 (509 aa).

One copy of the LRR 1; degenerate repeat lies at 111–146 (RQRLRLLDMTGMQEEGLEQNPDTMSLWSRTVTLAKA). An LRR 2; degenerate repeat occupies 210-234 (RLQCRDFRAEELSLRSTAGLLELLN). An LRR 3; degenerate repeat occupies 235 to 262 (PGSVRQIDLRFNNLGLSGLNVLLPHMAK). The stretch at 263–298 (FSHLQSLKLPYSNVDVRRLSPVMEEGLQSFASQLGQ) is one LRR 4; degenerate repeat. LRR repeat units follow at residues 299–323 (LGAL…LGGL), 324–355 (QRPL…SSLR), 356–374 (KLDL…PFLH), 380–407 (SGHL…ILCR), and 408–432 (CSWL…VLQN).

This sequence belongs to the PRAME family. LRRC14 subfamily.

Its subcellular location is the cytoplasm. This is Leucine-rich repeat-containing protein 14 from Xenopus laevis (African clawed frog).